A 359-amino-acid polypeptide reads, in one-letter code: Mitochondrial glutathione transporter SLC25A39 (359 aa).

Topologically, residues 1-14 (MDDQDPGGISPLQQ) are mitochondrial intermembrane. Solcar repeat units follow at residues 9–151 (ISPL…LKAF), 159–243 (SDLY…VKSQ), and 253–347 (TSVG…GKSF). Residues 15-35 (MVASGAGAVVTSLFMTPLDVV) form a helical membrane-spanning segment. Residues 36–121 (KVRLQSQRPT…VKIVRHEGTR (86 aa)) are Mitochondrial matrix-facing. Positions 74, 78, 88, and 94 each coordinate [2Fe-2S] cluster. The helical transmembrane segment at 122 to 142 (TLWSGLPATLVMTVPATAIYF) threads the bilayer. At 143 to 164 (TAYDQLKAFLCGQSLTSDLYAP) the chain is on the mitochondrial intermembrane side. The helical transmembrane segment at 165-185 (MVAGALARMGTVTVVSPLELV) threads the bilayer. Residues 186–214 (RTKLQAQHVSYRELAACVQAAVAQGGWRS) are Mitochondrial matrix-facing. Residues 215–235 (LWLGWGPTALRDVPFSALYWF) form a helical membrane-spanning segment. The Mitochondrial intermembrane segment spans residues 236-255 (NYELVKSQLNGPRQKEQTSV). Residues 256 to 276 (GISFVAGGISGMVAATLTLPF) traverse the membrane as a helical segment. At 277-317 (DVVKTQRQMSLGAVEAMRVKPPRVDSTWLLLRRIQAESGTR) the chain is on the mitochondrial matrix side. A helical membrane pass occupies residues 318–338 (GLFAGFLPRIIKAAPSCAIMI). At 339 to 359 (STYEFGKSFFHRLNQEQPLGH) the chain is on the mitochondrial intermembrane side.

This sequence belongs to the mitochondrial carrier (TC 2.A.29) family. In terms of processing, cleaved and degraded by AFG3L2; degradation by AFG3L2 is regulated by the ability of SLC25A39 to bind iron-sulfur. In absence of mitochondrial glutathione, SLC25A39 binds iron-sulfur, preventing cleavage and degradation by AFG3L2. The presence of mitochondrial glutathione prevents iron-sulfur-binding to SLC25A39, promoting cleavage and degradation by AFG3L2.

It is found in the mitochondrion inner membrane. The enzyme catalyses glutathione(in) = glutathione(out). The activity of SLC25A39 is regulated by levels of mitochondrial glutathione via its ability to bind [2Fe-2S] iron-sulfur cluster. Upon physiological levels of mitochondrial glutathione, glutathione prevents iron-sulfur-binding to SLC25A39 promoting cleavage and degradation by AFG3L2. Upon depletion of mitochondrial glutathione, SLC25A39 binds iron-sulfur, preventing cleavage and degradation by AFG3L2. Mitochondrial transporter required for glutathione import into mitochondria. Glutathione, which plays key roles in oxidative metabolism, is produced exclusively in the cytosol and is imported in many organelles. Mitochondrial glutathione is required for the activity and stability of proteins containing iron-sulfur clusters, as well as erythropoiesis. This Rattus norvegicus (Rat) protein is Mitochondrial glutathione transporter SLC25A39 (Slc25a39).